A 325-amino-acid chain; its full sequence is NADH-quinone oxidoreductase subunit H (325 aa).

8 consecutive transmembrane segments (helical) span residues 11–31 (ILLT…CGAF), 81–101 (VIFT…FAIV), 114–134 (IGIL…LFAG), 154–174 (LSYE…AGSF), 186–206 (VWNV…GVAV), 237–257 (FFVG…TLFF), 265–285 (LPPF…FILI), and 304–324 (ICLP…LWQA).

It belongs to the complex I subunit 1 family. NDH-1 is composed of 13 different subunits. Subunits NuoA, H, J, K, L, M, N constitute the membrane sector of the complex.

Its subcellular location is the cell inner membrane. It carries out the reaction a quinone + NADH + 5 H(+)(in) = a quinol + NAD(+) + 4 H(+)(out). Functionally, NDH-1 shuttles electrons from NADH, via FMN and iron-sulfur (Fe-S) centers, to quinones in the respiratory chain. The immediate electron acceptor for the enzyme in this species is believed to be ubiquinone. Couples the redox reaction to proton translocation (for every two electrons transferred, four hydrogen ions are translocated across the cytoplasmic membrane), and thus conserves the redox energy in a proton gradient. This subunit may bind ubiquinone. The chain is NADH-quinone oxidoreductase subunit H from Escherichia coli O7:K1 (strain IAI39 / ExPEC).